The following is a 106-amino-acid chain: Large ribosomal subunit protein P1A (106 aa).

The tract at residues 74-106 (AGGGAAAEEAAEEEKEEEAKEESDDDMGFGLFD) is disordered. Positions 82–100 (EAAEEEKEEEAKEESDDDM) are enriched in acidic residues.

Belongs to the eukaryotic ribosomal protein P1/P2 family. In terms of assembly, component of the large ribosomal subunit (LSU). Mature ribosomes consist of a small (40S) and a large (60S) subunit. The 40S subunit contains about 32 different proteins and 1 molecule of RNA (18S). The 60S subunit contains 45 different proteins and 3 molecules of RNA (25S, 5.8S and 5S). The 5 acidic ribosomal P-proteins form the stalk structure of the 60S subunit. They are organized as a pentameric complex in which uL10/P0 interacts with 2 heterodimers, P1A-P2B and P1B-P2A. In terms of processing, phosphorylated.

Its subcellular location is the cytoplasm. Functionally, component of the ribosome, a large ribonucleoprotein complex responsible for the synthesis of proteins in the cell. The small ribosomal subunit (SSU) binds messenger RNAs (mRNAs) and translates the encoded message by selecting cognate aminoacyl-transfer RNA (tRNA) molecules. The large subunit (LSU) contains the ribosomal catalytic site termed the peptidyl transferase center (PTC), which catalyzes the formation of peptide bonds, thereby polymerizing the amino acids delivered by tRNAs into a polypeptide chain. The nascent polypeptides leave the ribosome through a tunnel in the LSU and interact with protein factors that function in enzymatic processing, targeting, and the membrane insertion of nascent chains at the exit of the ribosomal tunnel. This is Large ribosomal subunit protein P1A (RPP1A) from Candida albicans (strain SC5314 / ATCC MYA-2876) (Yeast).